Here is a 338-residue protein sequence, read N- to C-terminus: Solute carrier family 35 member G3 (338 aa).

The interval 1–24 (MAGSHPYFNQPDSTHPSPPSAPPS) is disordered. 9 helical membrane passes run 37–57 (TSGL…VGPL), 67–87 (LPSL…ALLL), 105–125 (FFCA…VQVV), 160–180 (CGLL…LWTL), 190–210 (ALGY…LLVY), 221–241 (TVAF…LFVL), 250–270 (LLSW…FTCV), 281–301 (LVCA…YYML), and 305–325 (VAPS…IITA). An EamA 1 domain is found at 49–174 (LPAGFVGPLS…CILGLIIIVG (126 aa)). The EamA 2 domain maps to 272–325 (YAVTKAHPALVCAVLHSEVVVALILQYYMLHETVAPSDIMGAGVALGSIAIITA).

It belongs to the SLC35G solute transporter family.

Its subcellular location is the membrane. This chain is Solute carrier family 35 member G3 (SLC35G3), found in Pan paniscus (Pygmy chimpanzee).